Here is an 890-residue protein sequence, read N- to C-terminus: Possible lysine-specific histone demethylase 1 (890 aa).

Positions 1 to 13 are enriched in polar residues; the sequence is MKPTQFGGSSSKM. A disordered region spans residues 1–164; it reads MKPTQFGGSS…TVLSGQEGAV (164 aa). 2 positions are modified to phosphoserine: serine 24 and serine 27. A compositionally biased stretch (polar residues) spans 84–109; it reads NRPSGSGDTASNDKSGSASMGPNNQQ. Positions 110–122 are enriched in basic and acidic residues; sequence AERRSQSQTRKSE. The span at 123–138 shows a compositional bias: low complexity; it reads ANATSSSVSGPSAGNS. In terms of domain architecture, SWIRM spans 160-259; the sequence is QEGAVFQSRL…FGIFKRLKPI (100 aa). 267 to 295 is an FAD binding site; that stretch reads VIVIGAGISGLAVAHQLQQFGMDVIVLEA. The interval 860-890 is disordered; sequence DLSPNLSDSSPSSKKSEENSNSNTADSTELQ. Residues 861-882 are compositionally biased toward low complexity; it reads LSPNLSDSSPSSKKSEENSNSN. The residue at position 866 (serine 866) is a Phosphoserine.

It belongs to the flavin monoamine oxidase family. Component of a complex that contains at least HDAC1/Rpd3, CoRest and Su(var)3-3/Hdm. Requires FAD as cofactor.

It is found in the nucleus. It localises to the chromosome. Functionally, probable histone demethylase that specifically demethylates 'Lys-4' of histone H3, a specific tag for epigenetic transcriptional activation, thereby acting as a corepressor. Required for heterochromatic gene silencing. Acts by oxidizing the substrate by FAD to generate the corresponding imine that is subsequently hydrolyzed. Demethylates both mono- and tri-methylated 'Lys-4' of histone H3. May also demethylate 'Lys-9' of histone H3, Plays a role in the repression of neuronal genes. The sequence is that of Possible lysine-specific histone demethylase 1 (Su(var)3-3) from Drosophila melanogaster (Fruit fly).